The primary structure comprises 337 residues: Calcium-binding protein 39-like (337 aa).

This sequence belongs to the Mo25 family. As to quaternary structure, component of a trimeric complex composed of STK11/LKB1, STRAD (STRADA or STRADB) and CAB39/MO25 (CAB39/MO25alpha or CAB39L/MO25beta): the complex tethers STK11/LKB1 in the cytoplasm and stimulates its catalytic activity.

In terms of biological role, component of a complex that binds and activates STK11/LKB1. In the complex, required to stabilize the interaction between CAB39/MO25 (CAB39/MO25alpha or CAB39L/MO25beta) and STK11/LKB1. The protein is Calcium-binding protein 39-like (CAB39L) of Homo sapiens (Human).